Reading from the N-terminus, the 564-residue chain is Septation ring formation regulator EzrA (564 aa).

The Extracellular segment spans residues 1 to 2 (ME). Residues 3–21 (FVIGLLALFLILFATGYLF) traverse the membrane as a helical segment. Topologically, residues 22–564 (RKNIYKEIDR…RLEADAKQPE (543 aa)) are cytoplasmic. Coiled coils occupy residues 99-159 (QKSK…AYSH), 243-281 (KGYKLDHIQVEKELENLLKELKRAEDALLDELDLEEAAA), and 310-498 (KVPE…VELV).

Belongs to the EzrA family.

The protein resides in the cell membrane. Its function is as follows. Negative regulator of FtsZ ring formation; modulates the frequency and position of FtsZ ring formation. Inhibits FtsZ ring formation at polar sites. Interacts either with FtsZ or with one of its binding partners to promote depolymerization. The chain is Septation ring formation regulator EzrA from Bacillus licheniformis (strain ATCC 14580 / DSM 13 / JCM 2505 / CCUG 7422 / NBRC 12200 / NCIMB 9375 / NCTC 10341 / NRRL NRS-1264 / Gibson 46).